A 421-amino-acid chain; its full sequence is Gamma-glutamyl phosphate reductase (421 aa).

Belongs to the gamma-glutamyl phosphate reductase family.

The protein resides in the cytoplasm. It carries out the reaction L-glutamate 5-semialdehyde + phosphate + NADP(+) = L-glutamyl 5-phosphate + NADPH + H(+). Its pathway is amino-acid biosynthesis; L-proline biosynthesis; L-glutamate 5-semialdehyde from L-glutamate: step 2/2. Catalyzes the NADPH-dependent reduction of L-glutamate 5-phosphate into L-glutamate 5-semialdehyde and phosphate. The product spontaneously undergoes cyclization to form 1-pyrroline-5-carboxylate. In Pseudomonas paraeruginosa (strain DSM 24068 / PA7) (Pseudomonas aeruginosa (strain PA7)), this protein is Gamma-glutamyl phosphate reductase.